A 1733-amino-acid chain; its full sequence is ATP-binding cassette sub-family A member 17 (1733 aa).

The next 7 membrane-spanning stretches (helical) occupy residues 22–42 (TLIT…VLYL), 262–282 (FPLL…NSVL), 306–326 (AWFI…TVLF), 342–362 (TLIF…AFMM), 372–392 (GTVI…YITF), 403–423 (ILSC…ISLF), and 444–464 (FAQV…IAFL). In terms of domain architecture, ABC transporter 1 spans 519–752 (IEIQHLYKVF…YGAGYYMTII (234 aa)). Position 555–562 (555–562 (GHNGAGKT)) interacts with ATP. Residue asparagine 609 is glycosylated (N-linked (GlcNAc...) asparagine). 7 helical membrane-spanning segments follow: residues 906-926 (LVLS…LTFF), 1082-1102 (LVVN…ILTV), 1128-1148 (LLWD…VFLW), 1160-1180 (IPAV…LVYT), 1192-1212 (CVKL…LVTV), 1230-1250 (IFLI…YYNF), and 1287-1307 (IGKY…MLFL). In terms of domain architecture, ABC transporter 2 spans 1366–1599 (LVVKEVSKVY…FGISYSLQAK (234 aa)). An ATP-binding site is contributed by 1401–1408 (GLNGAGKT). Over residues 1681–1692 (ESSTKEQIQQEQ) the composition is skewed to polar residues. The disordered stretch occupies residues 1681-1733 (ESSTKEQIQQEQAVLASPSPPSNSRPISSPPSRLSSPTPKPLPSPPPSEPILL). Positions 1704–1717 (SRPISSPPSRLSSP) are enriched in low complexity. Over residues 1718-1733 (TPKPLPSPPPSEPILL) the composition is skewed to pro residues.

It belongs to the ABC transporter superfamily. ABCA family. In terms of processing, N-glycosylated. In the testis, detected predominantly in elongated spermatids at the late stage of germ cell development and in sperm, with no expression detected in immature germ cells such as spermatogonia and spermatocytes or in somatic cells such as Sertoli cells (at protein level). Expressed in the head and tail midpiece of elongated spermatids and sperm (at protein level). Expressed exclusively in the testis.

Its subcellular location is the endoplasmic reticulum membrane. It is found in the cytoplasm. The enzyme catalyses cholesterol(in) + ATP + H2O = cholesterol(out) + ADP + phosphate + H(+). Its function is as follows. Promotes cholesterol efflux from sperm which renders sperm capable of fertilization. Has also been shown to decrease levels of intracellular esterified neutral lipids including cholesteryl esters, fatty acid esters and triacylglycerols. The sequence is that of ATP-binding cassette sub-family A member 17 from Mus musculus (Mouse).